A 366-amino-acid chain; its full sequence is 3-isopropylmalate dehydrogenase (366 aa).

78-91 is a binding site for NAD(+); it reads GPKWEDLPSHLQPE. Arg99, Arg109, Arg138, and Asp227 together coordinate substrate. Residues Asp227, Asp251, and Asp255 each contribute to the Mg(2+) site. Residue 285–297 coordinates NAD(+); it reads GSAPDIKGKNIAN.

Belongs to the isocitrate and isopropylmalate dehydrogenases family. LeuB type 1 subfamily. As to quaternary structure, homodimer. Mg(2+) serves as cofactor. Mn(2+) is required as a cofactor.

It localises to the cytoplasm. It catalyses the reaction (2R,3S)-3-isopropylmalate + NAD(+) = 4-methyl-2-oxopentanoate + CO2 + NADH. The protein operates within amino-acid biosynthesis; L-leucine biosynthesis; L-leucine from 3-methyl-2-oxobutanoate: step 3/4. Catalyzes the oxidation of 3-carboxy-2-hydroxy-4-methylpentanoate (3-isopropylmalate) to 3-carboxy-4-methyl-2-oxopentanoate. The product decarboxylates to 4-methyl-2 oxopentanoate. In Buchnera aphidicola subsp. Baizongia pistaciae (strain Bp), this protein is 3-isopropylmalate dehydrogenase.